Reading from the N-terminus, the 148-residue chain is uncharacterized protein (148 aa).

This is an uncharacterized protein from Schizosaccharomyces pombe (strain 972 / ATCC 24843) (Fission yeast).